A 308-amino-acid chain; its full sequence is tRNA dimethylallyltransferase (308 aa).

8–15 (GPTGTGKS) is a binding site for ATP. 10–15 (TGTGKS) lines the substrate pocket.

The protein belongs to the IPP transferase family. In terms of assembly, monomer. Requires Mg(2+) as cofactor.

The enzyme catalyses adenosine(37) in tRNA + dimethylallyl diphosphate = N(6)-dimethylallyladenosine(37) in tRNA + diphosphate. Functionally, catalyzes the transfer of a dimethylallyl group onto the adenine at position 37 in tRNAs that read codons beginning with uridine, leading to the formation of N6-(dimethylallyl)adenosine (i(6)A). This Mycolicibacterium vanbaalenii (strain DSM 7251 / JCM 13017 / BCRC 16820 / KCTC 9966 / NRRL B-24157 / PYR-1) (Mycobacterium vanbaalenii) protein is tRNA dimethylallyltransferase.